We begin with the raw amino-acid sequence, 1382 residues long: Suppressor of organelle fusion 2 (1382 aa).

The BEACH domain maps to 229–463 (RIPLDEATSN…QLFNRPHPIR (235 aa)). WD repeat units lie at residues 1094-1133 (GHQE…DEIG) and 1140-1176 (KHTR…LLAQ).

Belongs to the WD repeat WDR81 family. In terms of assembly, interacts with sorf-1; the interaction is direct. Interacts with bec-1.

The protein localises to the early endosome. The protein resides in the late endosome. Its subcellular location is the cytoplasm. In terms of biological role, together with sorf-1 negatively regulates the levels of phosphatidylinositol 3-phosphate (PtdIns3P) to enable the conversion of early endosomes to late endosomes. Binds to sorf-1 and the sorf-1-sorf-2 complex likely acts through bec-1, a non-catalytic subunit of phosphatidylinositol 3-kinase (PI3K), to suppress PI3K activity, thereby negatively regulating endosomal PtdIns3P levels. This chain is Suppressor of organelle fusion 2, found in Caenorhabditis elegans.